Reading from the N-terminus, the 148-residue chain is Large ribosomal subunit protein bL9 (148 aa).

This sequence belongs to the bacterial ribosomal protein bL9 family.

In terms of biological role, binds to the 23S rRNA. The protein is Large ribosomal subunit protein bL9 of Dechloromonas aromatica (strain RCB).